Consider the following 133-residue polypeptide: Small ribosomal subunit protein eS24 (133 aa).

Met-1 carries the post-translational modification N-acetylmethionine. Thr-9 carries the phosphothreonine modification. Lys-37 participates in a covalent cross-link: Glycyl lysine isopeptide (Lys-Gly) (interchain with G-Cter in SUMO2). Residues 92-133 (ARHGLYEKKKTSRKQRKERKNRMKKVRGTAKANVGAGKKPKE) are disordered. The span at 101–119 (KTSRKQRKERKNRMKKVRG) shows a compositional bias: basic residues.

It belongs to the eukaryotic ribosomal protein eS24 family. In terms of assembly, component of the small ribosomal subunit. Part of the small subunit (SSU) processome, composed of more than 70 proteins and the RNA chaperone small nucleolar RNA (snoRNA) U3.

It localises to the cytoplasm. The protein localises to the nucleus. Its subcellular location is the nucleolus. In terms of biological role, component of the small ribosomal subunit. The ribosome is a large ribonucleoprotein complex responsible for the synthesis of proteins in the cell. Required for processing of pre-rRNA and maturation of 40S ribosomal subunits. Part of the small subunit (SSU) processome, first precursor of the small eukaryotic ribosomal subunit. During the assembly of the SSU processome in the nucleolus, many ribosome biogenesis factors, an RNA chaperone and ribosomal proteins associate with the nascent pre-rRNA and work in concert to generate RNA folding, modifications, rearrangements and cleavage as well as targeted degradation of pre-ribosomal RNA by the RNA exosome. The polypeptide is Small ribosomal subunit protein eS24 (RPS24) (Oryctolagus cuniculus (Rabbit)).